A 1290-amino-acid polypeptide reads, in one-letter code: Alpha-factor-transporting ATPase (1290 aa).

The Cytoplasmic portion of the chain corresponds to 1–25; that stretch reads MNFLSFKTTKHYHIFRYVNIRNDYR. The helical transmembrane segment at 26 to 46 threads the bilayer; it reads LLMIMIIGTVATGLVPAITSI. The ABC transmembrane type-1 1 domain maps to 27–319; it reads LMIMIIGTVA…TLHQIVVLQK (293 aa). The Extracellular segment spans residues 47–75; that stretch reads LTGRVFDLLSVFVANGSHQGLYSQLVQRS. N-linked (GlcNAc...) asparagine glycosylation is present at Asn61. The chain crosses the membrane as a helical span at residues 76-96; sequence MAVMALGAASVPVMWLSLTSW. The Cytoplasmic portion of the chain corresponds to 97–150; that stretch reads MHIGERQGFRIRSQILEAYLEEKPMEWYDNNEKLLGDFTQINRCVEELRSSSAE. The chain crosses the membrane as a helical span at residues 151 to 171; the sequence is ASAITFQNLVAICALLGTSFY. Residues 172–173 are Extracellular-facing; that stretch reads YS. The chain crosses the membrane as a helical span at residues 174-194; sequence WSLTLIILCSSPIITFFAVVF. At 195-262 the chain is on the cytoplasmic side; sequence SRMIHVYSEK…SCFFVAANAG (68 aa). A helical transmembrane segment spans residues 263–283; the sequence is ILRFLTLTMFVQGFWFGSAMI. Over 284–296 the chain is Extracellular; sequence KKGKLNINDVITC. Residues 297–317 form a helical membrane-spanning segment; sequence FHSCIMLGSTLNNTLHQIVVL. Topologically, residues 318–715 are cytoplasmic; sequence QKGGVAMEKI…RMIKSIRYKK (398 aa). The ABC transporter 1 domain occupies 357-603; it reads LTFANVSFSY…PTTTFSTWYH (247 aa). 392-399 is a binding site for ATP; it reads GKSGSGKS. Residues 716-736 traverse the membrane as a helical segment; the sequence is ILILGLLCSLIAGATNPVFSY. One can recognise an ABC transmembrane type-1 2 domain in the interval 717 to 1007; sequence LILGLLCSLI…LVSQIPDISR (291 aa). Residues 737–763 lie on the Extracellular side of the membrane; sequence TFSFLLEGIVPSTDGKTGSSHYLAKWS. Residues 764–784 form a helical membrane-spanning segment; it reads LLVLGVAAADGIFNFAKGFLL. The Cytoplasmic segment spans residues 785–838; it reads DCCSEYWVMDLRNEVMEKLTRKNMDWFSGENNKASEISALVLNDLRDLRSLVSE. A helical membrane pass occupies residues 839–859; the sequence is FLSAMTSFVTVSTIGLIWALV. Topologically, residues 860 to 865 are extracellular; sequence SGWKLS. The helical transmembrane segment at 866–886 threads the bilayer; that stretch reads LVCISMFPLIIIFSAIYGGIL. The Cytoplasmic segment spans residues 887–945; it reads QKCETDYKTSVAQLENCLYQIVTNIKTIKCLQAEFHFQLTYHDLKIKMQQIASKRAIAT. A helical membrane pass occupies residues 946–966; that stretch reads GFGISMTNMIVMCIQAIIYYY. Topologically, residues 967–981 are extracellular; the sequence is GLKLVMIHEYTSKEM. Residues 982–1002 traverse the membrane as a helical segment; that stretch reads FTTFTLLLFTIMSCTSLVSQI. Over 1003-1290 the chain is Cytoplasmic; sequence PDISRGQRAA…LFQIVSNQSS (288 aa). Lys1022 is covalently cross-linked (Glycyl lysine isopeptide (Lys-Gly) (interchain with G-Cter in ubiquitin)). Positions 1052–1287 constitute an ABC transporter 2 domain; it reads VSIQNLTFAY…RGELFQIVSN (236 aa). 1087–1094 is a binding site for ATP; that stretch reads GESGTGKS.

Belongs to the ABC transporter superfamily. Alpha-factor sex pheromone exporter (TC 3.A.1.206) family. In terms of processing, degraded via the ubiquitin system.

The protein localises to the membrane. It catalyses the reaction an [alpha-factor](in) + ATP + H2O = an [alpha-factor](out) + ADP + phosphate + H(+). Functionally, STE6 is required in yeast MATA cells for production of A-factor pheromone. STE6 is involved in the transport of the farnesyl-derivation of the A-factor pheromone. The sequence is that of Alpha-factor-transporting ATPase (STE6) from Saccharomyces cerevisiae (strain ATCC 204508 / S288c) (Baker's yeast).